We begin with the raw amino-acid sequence, 458 residues long: RuvB-like helicase 1 (458 aa).

A disordered region spans residues 1-29 (MVQISEVKGNSRDNRTAAHTHIKGLGLRP). Residue 71–78 (GGPGTGKT) participates in ATP binding.

It belongs to the RuvB family. In terms of assembly, may form heterododecamers with RVB2. Component of the SWR1 chromatin remodeling complex, the INO80 chromatin remodeling complex, and of the R2TP complex.

The protein localises to the nucleus. It catalyses the reaction ATP + H2O = ADP + phosphate + H(+). In terms of biological role, DNA helicase which participates in several chromatin remodeling complexes, including the SWR1 and the INO80 complexes. The SWR1 complex mediates the ATP-dependent exchange of histone H2A for the H2A variant HZT1 leading to transcriptional regulation of selected genes by chromatin remodeling. The INO80 complex remodels chromatin by shifting nucleosomes and is involved in DNA repair. Also involved in pre-rRNA processing. The chain is RuvB-like helicase 1 (rvb1) from Emericella nidulans (strain FGSC A4 / ATCC 38163 / CBS 112.46 / NRRL 194 / M139) (Aspergillus nidulans).